We begin with the raw amino-acid sequence, 237 residues long: MANSTGKPTSSTQEDEEVTYILAQLMQDVMDREEDIDDEDDIDDEVASLPLLLVSQANQKQSRKREEKTEKNQPKRVKNQNIMKINIHDFSEETLRLIEDWYNAELDPQDIFGDDEVTRRFSRPIKKQLMSSDVDTDQSRLMLSKEQVKEKMLPFLEESEDPVKGVDVSVYGPDGEVQQMKFKMWNGDKTPVLTSGWMQFVADYGLLKTSDFVTDGKVSQLEHVFIRGSKVRCCNTS.

A disordered region spans residues 53 to 79 (LVSQANQKQSRKREEKTEKNQPKRVKN). Positions 64-73 (KREEKTEKNQ) are enriched in basic and acidic residues. Residues 126 to 230 (KKQLMSSDVD…LEHVFIRGSK (105 aa)) constitute a DNA-binding region (TF-B3).

Its subcellular location is the nucleus. In Arabidopsis thaliana (Mouse-ear cress), this protein is B3 domain-containing protein At1g20600.